The chain runs to 192 residues: UPF0301 protein Jann_3896 (192 aa).

This sequence belongs to the UPF0301 (AlgH) family.

This is UPF0301 protein Jann_3896 from Jannaschia sp. (strain CCS1).